The sequence spans 297 residues: Ribonuclease H2 subunit A (297 aa).

In terms of domain architecture, RNase H type-2 spans 21-248 (PCVLGIDEAG…ASTIVEKRCV (228 aa)). A divalent metal cation contacts are provided by Asp27, Glu28, and Asp138.

This sequence belongs to the RNase HII family. Eukaryotic subfamily. It depends on Mn(2+) as a cofactor. Mg(2+) is required as a cofactor.

The catalysed reaction is Endonucleolytic cleavage to 5'-phosphomonoester.. In terms of biological role, catalytic subunit of RNase HII, an endonuclease that specifically degrades the RNA of RNA:DNA hybrids. Participates in DNA replication, possibly by mediating the removal of lagging-strand Okazaki fragment RNA primers during DNA replication. Mediates the excision of single ribonucleotides from DNA:RNA duplexes. This chain is Ribonuclease H2 subunit A (rnh-2), found in Caenorhabditis elegans.